Consider the following 60-residue polypeptide: Large ribosomal subunit protein uL30 (60 aa).

This sequence belongs to the universal ribosomal protein uL30 family. In terms of assembly, part of the 50S ribosomal subunit.

The protein is Large ribosomal subunit protein uL30 of Dehalococcoides mccartyi (strain ATCC BAA-2100 / JCM 16839 / KCTC 5957 / BAV1).